The sequence spans 342 residues: MKSFASLLFLAATAAAHATWQQIWVNGVDGGTSCLRRAANNNPIDVGAKELACNAHTLSPNVCTIKPGDKVTVEMHAQHGDRSCAQEAIGGNHYGPVMVYMAKVDDARTADANAADWFKVSEMGMASNNPVYWAVQVLNDNCGHWTFTVPDLAPGNYLIRSEVIALHVAGSIGGAQFYPGCFQVNVVGNGSGRPTETVKFPGAYKATDPGVLFDMYRPQSTYIIPGPRPYGTSPATVANTPYPTTATWNTALQPTTVPTVTPPVGGGTNPPPVTTVAPPVVTSQPPVPPTTQQPPVVTPTAPPSGPLQTQYGQCGGQGWNGPTQCQPPYTCTASNQWYHQCL.

A signal peptide spans 1-18 (MKSFASLLFLAATAAAHA). Residue His17 participates in Cu(2+) binding. Residues Thr19 and Thr57 each carry the phosphothreonine modification. Ser59 carries the post-translational modification Phosphoserine. The cysteines at positions 63 and 181 are disulfide-linked. His93 is a binding site for Cu(2+). Residues His167 and Gln176 each contribute to the O2 site. Position 178 (Tyr178) interacts with Cu(2+). A glycan (N-linked (GlcNAc...) asparagine) is linked at Asn189. The X282 extension stretch occupies residues 233–263 (SPATVANTPYPTTATWNTALQPTTVPTVTPP). The tract at residues 281–302 (VTSQPPVPPTTQQPPVVTPTAP) is disordered. Pro residues predominate over residues 285 to 302 (PPVPPTTQQPPVVTPTAP). The region spanning 306 to 342 (PLQTQYGQCGGQGWNGPTQCQPPYTCTASNQWYHQCL) is the CBM1 domain.

The protein belongs to the polysaccharide monooxygenase AA9 family. Cu(2+) is required as a cofactor.

The protein resides in the secreted. It catalyses the reaction [(1-&gt;4)-beta-D-glucosyl]n+m + reduced acceptor + O2 = 4-dehydro-beta-D-glucosyl-[(1-&gt;4)-beta-D-glucosyl]n-1 + [(1-&gt;4)-beta-D-glucosyl]m + acceptor + H2O.. Lytic polysaccharide monooxygenase (LPMO) that depolymerizes crystalline and amorphous polysaccharides via the oxidation of scissile alpha- or beta-(1-4)-glycosidic bonds, yielding C1 oxidation products. Catalysis by LPMOs requires the reduction of the active-site copper from Cu(II) to Cu(I) by a reducing agent and H(2)O(2) or O(2) as a cosubstrate. Shows only weak binding properties to cellulose, and low cellulolytic oxidative activity which questions the involvement of X282 extension-containing AA9 proteins in the degradation of plant cell wall and opens new avenues as to the divergence of function of some AA9 members. The protein is AA9 family lytic polysaccharide monooxygenase AA9-X282 of Coprinopsis cinerea (strain Okayama-7 / 130 / ATCC MYA-4618 / FGSC 9003) (Inky cap fungus).